The primary structure comprises 429 residues: Cell wall protein ECM33 (429 aa).

The N-terminal stretch at 1 to 19 is a signal peptide; sequence MQFKNALTATAILSASALA. Asn-21, Asn-56, Asn-82, Asn-196, Asn-209, Asn-227, Asn-234, Asn-241, Asn-267, Asn-279, Asn-304, and Asn-328 each carry an N-linked (GlcNAc...) asparagine glycan. Ser-339 is modified (phosphoserine). The span at 361–401 shows a compositional bias: low complexity; it reads LSSTSTESSKSSATSSASSSGDASNAQASVSASASSSSSSS. The tract at residues 361-410 is disordered; it reads LSSTSTESSKSSATSSASSSGDASNAQASVSASASSSSSSSKKSKGAAPE. Residue Gly-406 is the site of GPI-anchor amidated glycine attachment. The propeptide at 407 to 429 is removed in mature form; it reads AAPELVPATSFMGVVAAVAVALL.

Belongs to the SPS2 family. The GPI-anchor is attached to the protein in the endoplasmic reticulum and serves to target the protein to the cell surface. There, the glucosamine-inositol phospholipid moiety is cleaved off and the GPI-modified mannoprotein is covalently attached via its lipidless GPI glycan remnant to the 1,6-beta-glucan of the outer cell wall layer.

The protein localises to the cell membrane. The protein resides in the secreted. It localises to the cell wall. Functionally, required for proper cell wall integrity and for the correct assembly of the mannoprotein outer layer of the cell wall. Important for apical bud growth. This chain is Cell wall protein ECM33 (ECM33), found in Saccharomyces cerevisiae (strain YJM789) (Baker's yeast).